A 116-amino-acid polypeptide reads, in one-letter code: Large ribosomal subunit protein uL18 (116 aa).

This sequence belongs to the universal ribosomal protein uL18 family. As to quaternary structure, part of the 50S ribosomal subunit; part of the 5S rRNA/L5/L18/L25 subcomplex. Contacts the 5S and 23S rRNAs.

In terms of biological role, this is one of the proteins that bind and probably mediate the attachment of the 5S RNA into the large ribosomal subunit, where it forms part of the central protuberance. In Hahella chejuensis (strain KCTC 2396), this protein is Large ribosomal subunit protein uL18.